The following is a 391-amino-acid chain: Elongation factor Tu (391 aa).

In terms of domain architecture, tr-type G spans 10–201; the sequence is KPHVNIGTIG…AVDEFIPTPE (192 aa). The segment at 19 to 26 is G1; that stretch reads GHVDHGKT. Residue 19 to 26 coordinates GTP; that stretch reads GHVDHGKT. Position 26 (threonine 26) interacts with Mg(2+). The G2 stretch occupies residues 55 to 59; the sequence is GITIS. Residues 76–79 form a G3 region; sequence DCPG. GTP-binding positions include 76-80 and 131-134; these read DCPGH and NKVD. Positions 131–134 are G4; that stretch reads NKVD. Residues 169-171 form a G5 region; it reads SAL.

It belongs to the TRAFAC class translation factor GTPase superfamily. Classic translation factor GTPase family. EF-Tu/EF-1A subfamily. As to quaternary structure, monomer.

The protein resides in the cytoplasm. The enzyme catalyses GTP + H2O = GDP + phosphate + H(+). Functionally, GTP hydrolase that promotes the GTP-dependent binding of aminoacyl-tRNA to the A-site of ribosomes during protein biosynthesis. In Roseobacter denitrificans (strain ATCC 33942 / OCh 114) (Erythrobacter sp. (strain OCh 114)), this protein is Elongation factor Tu.